Consider the following 290-residue polypeptide: Beta carbonic anhydrase 6, mitochondrial (290 aa).

The transit peptide at 1–20 (MAFTLGGRARRLVSATSVHQ) directs the protein to the mitochondrion. Serine 122 is subject to Phosphoserine. Cysteine 226 carries the post-translational modification S-nitrosocysteine.

It belongs to the beta-class carbonic anhydrase family. Strongly expressed in aerial tissues including leaves, stems, flowers and siliques, and, to a lower extent, in roots. Accumulates in guard cells.

It is found in the mitochondrion. It carries out the reaction hydrogencarbonate + H(+) = CO2 + H2O. Its function is as follows. Reversible hydration of carbon dioxide. The chain is Beta carbonic anhydrase 6, mitochondrial (BCA6) from Arabidopsis thaliana (Mouse-ear cress).